Consider the following 223-residue polypeptide: Flagellar L-ring protein 2 (223 aa).

The signal sequence occupies residues 1-17; the sequence is MKWLSKSWAVAVVLLVG. Cys18 carries the N-palmitoyl cysteine lipid modification. Residue Cys18 is the site of S-diacylglycerol cysteine attachment.

It belongs to the FlgH family. As to quaternary structure, the basal body constitutes a major portion of the flagellar organelle and consists of four rings (L,P,S, and M) mounted on a central rod.

The protein localises to the cell outer membrane. Its subcellular location is the bacterial flagellum basal body. Functionally, assembles around the rod to form the L-ring and probably protects the motor/basal body from shearing forces during rotation. The protein is Flagellar L-ring protein 2 of Vibrio parahaemolyticus serotype O3:K6 (strain RIMD 2210633).